We begin with the raw amino-acid sequence, 243 residues long: Variant surface antigen E (243 aa).

Positions 1 to 29 (MKKSIFSKKLLVSFGSLVTLAAIPLIAIS) are cleaved as a signal peptide. The N-palmitoyl cysteine moiety is linked to residue C30. The S-diacylglycerol cysteine moiety is linked to residue C30. The interval 34–243 (TDNLSQSQQP…TTSDGQNQNK (210 aa)) is disordered. Over residues 52–92 (GTNTENGSNNGSGSGTTNSSGGTNQSGSASGNGSSNSSVST) the composition is skewed to low complexity. A compositionally biased stretch (polar residues) spans 93 to 243 (PDGQHSNPSN…TTSDGQNQNK (151 aa)). Repeat copies occupy residues 97 to 109 (HSNPSNPTTSDPK), 110 to 122 (ESNPSNPTTSDPK), 123 to 135 (ESNPSNPTTSDGQ), 136 to 148 (HSNPSNPTTSDPK), 149 to 161 (ESNPSNPTTSDGQ), 162 to 174 (HSNPSNPTTSDGQ), 175 to 187 (HSNPSNPTTSDGQ), 188 to 200 (HSNPSNPTTSDGQ), 201 to 213 (HSNPSNPTTSDGQ), 214 to 226 (HSNPSNPTTSDGQ), and 227 to 239 (HSNPSNPTTSDGQ). Residues 97-239 (HSNPSNPTTS…PSNPTTSDGQ (143 aa)) are 11 X 13 AA tandem repeats.

Its subcellular location is the cell membrane. Functionally, responsible for the antigenic diversity for host adaptation. Expression in E.coli of a construct containing vlpD, vlpE, and vlpF yields antigenically distinguishable products corresponding to each gene. The sequence is that of Variant surface antigen E (vlpE) from Mesomycoplasma hyorhinis (Mycoplasma hyorhinis).